The sequence spans 174 residues: Trypsin inhibitor (174 aa).

Cystine bridges form between Cys40–Cys86 and Cys131–Cys140.

This sequence belongs to the protease inhibitor I3 (leguminous Kunitz-type inhibitor) family. In terms of assembly, heterodimer of an alpha and a beta chain linked by a disulfide bond.

Its function is as follows. Inhibits trypsin and chymotrypsin with a 1:1 stoichiometry, with dissociation constants of 1.56 nM and 120 nM respectively. Inhibits plasma kallikrein, factor XIIa and plasmin with dissociation constants of 5.0 nM, 150 nM and 18 nM respectively. Does not inhibit factor Xa, thrombin, tissue kallikrein or cysteine proteinases such as papain and bromelain. The sequence is that of Trypsin inhibitor from Enterolobium contortisiliquum (Pacara earpod tree).